The following is a 194-amino-acid chain: NADH-quinone oxidoreductase subunit B (194 aa).

The [4Fe-4S] cluster site is built by C72, C73, C137, and C167.

The protein belongs to the complex I 20 kDa subunit family. In terms of assembly, NDH-1 is composed of 14 different subunits. Subunits NuoB, C, D, E, F, and G constitute the peripheral sector of the complex. Requires [4Fe-4S] cluster as cofactor.

The protein localises to the cell inner membrane. The enzyme catalyses a quinone + NADH + 5 H(+)(in) = a quinol + NAD(+) + 4 H(+)(out). NDH-1 shuttles electrons from NADH, via FMN and iron-sulfur (Fe-S) centers, to quinones in the respiratory chain. Couples the redox reaction to proton translocation (for every two electrons transferred, four hydrogen ions are translocated across the cytoplasmic membrane), and thus conserves the redox energy in a proton gradient. The polypeptide is NADH-quinone oxidoreductase subunit B (Granulibacter bethesdensis (strain ATCC BAA-1260 / CGDNIH1)).